The sequence spans 160 residues: Eukaryotic translation initiation factor 5A (160 aa).

Residues 1-12 show a composition bias toward basic and acidic residues; the sequence is MSDEEHHFESKA. The tract at residues 1–21 is disordered; it reads MSDEEHHFESKADAGASKTFP. Lysine 52 is modified (hypusine).

This sequence belongs to the eIF-5A family. In terms of processing, lys-53 undergoes hypusination, a unique post-translational modification that consists in the addition of a butylamino group from spermidine to lysine side chain, leading to the formation of the unusual amino acid hypusine. eIF-5As are the only known proteins to undergo this modification, which is essential for their function.

Functionally, translation factor that promotes translation elongation and termination, particularly upon ribosome stalling at specific amino acid sequence contexts. Binds between the exit (E) and peptidyl (P) site of the ribosome and promotes rescue of stalled ribosome: specifically required for efficient translation of polyproline-containing peptides as well as other motifs that stall the ribosome. Acts as a ribosome quality control (RQC) cofactor by joining the RQC complex to facilitate peptidyl transfer during CAT tailing step. This chain is Eukaryotic translation initiation factor 5A, found in Manihot esculenta (Cassava).